The primary structure comprises 367 residues: uncharacterized protein (367 aa).

The ABC transporter domain maps to 4-234; the sequence is LTFEHVKKSY…PANLFVAGFI (231 aa). 36 to 43 contributes to the ATP binding site; the sequence is GPSGCGKS.

The protein belongs to the ABC transporter superfamily.

This is an uncharacterized protein from Bacillus subtilis (strain 168).